The sequence spans 250 residues: Snake venom serine protease pictobin (250 aa).

Residues 1–11 form the signal peptide; that stretch reads ANLLILQVSYA. A propeptide spanning residues 12 to 17 is cleaved from the precursor; it reads QKSSEL. Residues 18–241 enclose the Peptidase S1 domain; that stretch reads VIGGDECNIN…HLHWILSIIA (224 aa). Cystine bridges form between Cys-24–Cys-155, Cys-42–Cys-58, Cys-134–Cys-202, Cys-166–Cys-181, and Cys-192–Cys-217. The Charge relay system role is filled by His-57. N-linked (GlcNAc...) asparagine glycans are attached at residues Asn-71 and Asn-95. Asp-102 functions as the Charge relay system in the catalytic mechanism. N-linked (GlcNAc...) asparagine glycans are attached at residues Asn-146 and Asn-162. Residue Ser-196 is the Charge relay system of the active site. Residue Asn-243 is glycosylated (N-linked (GlcNAc...) asparagine).

It belongs to the peptidase S1 family. Snake venom subfamily. In terms of assembly, monomer. Expressed by the venom gland.

It is found in the secreted. Its function is as follows. Snake venom serine protease that may impair the hemostatic system of the prey. The polypeptide is Snake venom serine protease pictobin (Bothrops pictus (Desert lancehead)).